Here is a 95-residue protein sequence, read N- to C-terminus: Large ribosomal subunit protein bL27 (95 aa).

Residues 1 to 24 are disordered; sequence MAHKKGTGSTRNGRDSNSQRLGVK. Positions 7-20 are enriched in polar residues; the sequence is TGSTRNGRDSNSQR.

Belongs to the bacterial ribosomal protein bL27 family.

The chain is Large ribosomal subunit protein bL27 from Trichodesmium erythraeum (strain IMS101).